A 171-amino-acid chain; its full sequence is Myosin regulatory light chain 12B (171 aa).

Position 18 is a phosphothreonine; by MLCK and ZIPK/DAPK3 (Thr18). Residue Ser19 is modified to Phosphoserine; by MLCK and ZIPK/DAPK3. EF-hand domains follow at residues Ser28–Asn63, Asp97–Arg132, and Phe133–Asp168. Residues Asp41, Asn43, Asp45, and Asp52 each contribute to the Ca(2+) site.

As to quaternary structure, myosin is a hexamer of 2 heavy chains and 4 light chains: interacts with myosin heavy chain MYO19. Phosphorylation increases the actin-activated myosin ATPase activity and thereby regulates the contractile activity. It is required to generate the driving force in the migration of the cells but not necessary for localization of myosin-2 at the leading edge. Phosphorylation is reduced following epigallocatechin-3-O-gallate treatment.

In terms of biological role, myosin regulatory subunit that plays an important role in regulation of both smooth muscle and nonmuscle cell contractile activity via its phosphorylation. Phosphorylation triggers actin polymerization in vascular smooth muscle. Implicated in cytokinesis, receptor capping, and cell locomotion. The polypeptide is Myosin regulatory light chain 12B (MYL12B) (Bos taurus (Bovine)).